The chain runs to 356 residues: Homoserine O-acetyltransferase (356 aa).

An AB hydrolase-1 domain is found at V49–L337. S143 functions as the Nucleophile in the catalytic mechanism. R212 serves as a coordination point for substrate. Catalysis depends on residues D304 and H333. D334 serves as a coordination point for substrate.

Belongs to the AB hydrolase superfamily. MetX family. Homodimer.

Its subcellular location is the cytoplasm. The catalysed reaction is L-homoserine + acetyl-CoA = O-acetyl-L-homoserine + CoA. The protein operates within amino-acid biosynthesis; L-methionine biosynthesis via de novo pathway; O-acetyl-L-homoserine from L-homoserine: step 1/1. In terms of biological role, transfers an acetyl group from acetyl-CoA to L-homoserine, forming acetyl-L-homoserine. The sequence is that of Homoserine O-acetyltransferase from Nostoc punctiforme (strain ATCC 29133 / PCC 73102).